The chain runs to 239 residues: Ribonuclease PH (239 aa).

Phosphate-binding positions include arginine 86 and 124-126; that span reads GTR.

This sequence belongs to the RNase PH family. As to quaternary structure, homohexameric ring arranged as a trimer of dimers.

It catalyses the reaction tRNA(n+1) + phosphate = tRNA(n) + a ribonucleoside 5'-diphosphate. Functionally, phosphorolytic 3'-5' exoribonuclease that plays an important role in tRNA 3'-end maturation. Removes nucleotide residues following the 3'-CCA terminus of tRNAs; can also add nucleotides to the ends of RNA molecules by using nucleoside diphosphates as substrates, but this may not be physiologically important. Probably plays a role in initiation of 16S rRNA degradation (leading to ribosome degradation) during starvation. The sequence is that of Ribonuclease PH from Rickettsia africae (strain ESF-5).